The following is a 41-amino-acid chain: Large ribosomal subunit protein bL36 (41 aa).

Belongs to the bacterial ribosomal protein bL36 family.

The chain is Large ribosomal subunit protein bL36 from Bartonella bacilliformis (strain ATCC 35685 / KC583 / Herrer 020/F12,63).